A 40-amino-acid polypeptide reads, in one-letter code: Cytochrome b6-f complex subunit 5 (40 aa).

Residues 5–25 (ILLGMVLGFVPVTIAGLLVAA) traverse the membrane as a helical segment.

This sequence belongs to the PetG family. The 4 large subunits of the cytochrome b6-f complex are cytochrome b6, subunit IV (17 kDa polypeptide, PetD), cytochrome f and the Rieske protein, while the 4 small subunits are PetG, PetL, PetM and PetN. The complex functions as a dimer.

Its subcellular location is the cell inner membrane. In terms of biological role, component of the cytochrome b6-f complex, which mediates electron transfer between photosystem II (PSII) and photosystem I (PSI), cyclic electron flow around PSI, and state transitions. PetG is required for either the stability or assembly of the cytochrome b6-f complex. This chain is Cytochrome b6-f complex subunit 5, found in Gloeobacter violaceus (strain ATCC 29082 / PCC 7421).